Consider the following 255-residue polypeptide: Uracil-DNA glycosylase (255 aa).

Asp-90 acts as the Proton acceptor in catalysis.

It belongs to the uracil-DNA glycosylase (UDG) superfamily. UNG family.

It is found in the host nucleus. It carries out the reaction Hydrolyzes single-stranded DNA or mismatched double-stranded DNA and polynucleotides, releasing free uracil.. Excises uracil residues from the DNA which can arise as a result of misincorporation of dUMP residues by DNA polymerase or deamination of cytosines. Therefore may reduce deleterious uracil incorporation into the viral genome, particularly in terminally differentiated cells which lack DNA repair enzymes. The protein is Uracil-DNA glycosylase of Equine herpesvirus 2 (strain 86/87) (EHV-2).